The primary structure comprises 670 residues: Probable urocanate hydratase (670 aa).

NAD(+) contacts are provided by residues 126–127 (GG), Q204, 250–252 (GMS), E270, 316–317 (NV), 338–342 (QTSLH), 349–350 (FY), Y398, and G590.

Belongs to the urocanase family. Requires NAD(+) as cofactor.

The catalysed reaction is 4-imidazolone-5-propanoate = trans-urocanate + H2O. Its pathway is amino-acid degradation; L-histidine degradation into L-glutamate; N-formimidoyl-L-glutamate from L-histidine: step 2/3. This is Probable urocanate hydratase from Caenorhabditis elegans.